Here is a 575-residue protein sequence, read N- to C-terminus: Proline--tRNA ligase (575 aa).

The protein belongs to the class-II aminoacyl-tRNA synthetase family. ProS type 1 subfamily. As to quaternary structure, homodimer.

Its subcellular location is the cytoplasm. The catalysed reaction is tRNA(Pro) + L-proline + ATP = L-prolyl-tRNA(Pro) + AMP + diphosphate. Its function is as follows. Catalyzes the attachment of proline to tRNA(Pro) in a two-step reaction: proline is first activated by ATP to form Pro-AMP and then transferred to the acceptor end of tRNA(Pro). As ProRS can inadvertently accommodate and process non-cognate amino acids such as alanine and cysteine, to avoid such errors it has two additional distinct editing activities against alanine. One activity is designated as 'pretransfer' editing and involves the tRNA(Pro)-independent hydrolysis of activated Ala-AMP. The other activity is designated 'posttransfer' editing and involves deacylation of mischarged Ala-tRNA(Pro). The misacylated Cys-tRNA(Pro) is not edited by ProRS. This Desulfitobacterium hafniense (strain DSM 10664 / DCB-2) protein is Proline--tRNA ligase.